Reading from the N-terminus, the 326-residue chain is Putative HTH-type transcriptional regulatory protein MMP0678 (326 aa).

One can recognise an HTH cro/C1-type domain in the interval 128–183 (LRETREKLKISVGELAEVSRVSRKTIYKYEQNEANPSAEVAIKIEEYLDVPLIKGI). Positions 139 to 158 (VGELAEVSRVSRKTIYKYEQ) form a DNA-binding region, H-T-H motif.

The protein is Putative HTH-type transcriptional regulatory protein MMP0678 of Methanococcus maripaludis (strain DSM 14266 / JCM 13030 / NBRC 101832 / S2 / LL).